Here is a 431-residue protein sequence, read N- to C-terminus: C4-dicarboxylate transport protein (431 aa).

The next 8 helical transmembrane spans lie at 8-28 (ILYV…HFWP), 44-64 (LIKM…IAGM), 78-98 (LLYF…AAHL), 148-168 (GDIL…AAIG), 188-208 (IVHV…AFTI), 222-242 (LIGT…GAIA), 307-327 (IYMT…LTLL), and 355-375 (AATL…ILGI).

Belongs to the dicarboxylate/amino acid:cation symporter (DAACS) (TC 2.A.23) family.

The protein localises to the cell inner membrane. In terms of biological role, responsible for the transport of dicarboxylates such as succinate, fumarate, and malate from the periplasm across the membrane. This is C4-dicarboxylate transport protein from Cupriavidus pinatubonensis (strain JMP 134 / LMG 1197) (Cupriavidus necator (strain JMP 134)).